We begin with the raw amino-acid sequence, 175 residues long: Shikimate kinase (175 aa).

Residue 14–19 (GAGKST) coordinates ATP. Residue Ser18 coordinates Mg(2+). Substrate contacts are provided by Asp36, Arg60, and Gly82. Arg120 contributes to the ATP binding site. Arg140 serves as a coordination point for substrate. Gln157 contributes to the ATP binding site.

The protein belongs to the shikimate kinase family. In terms of assembly, monomer. It depends on Mg(2+) as a cofactor.

The protein localises to the cytoplasm. The catalysed reaction is shikimate + ATP = 3-phosphoshikimate + ADP + H(+). Its pathway is metabolic intermediate biosynthesis; chorismate biosynthesis; chorismate from D-erythrose 4-phosphate and phosphoenolpyruvate: step 5/7. Its function is as follows. Catalyzes the specific phosphorylation of the 3-hydroxyl group of shikimic acid using ATP as a cosubstrate. The protein is Shikimate kinase of Actinobacillus succinogenes (strain ATCC 55618 / DSM 22257 / CCUG 43843 / 130Z).